The primary structure comprises 154 residues: Protein X (154 aa).

A disordered region spans residues 28-50 (RPLPGPLGAVPPSSPSAVPADDG). Over residues 33 to 48 (PLGAVPPSSPSAVPAD) the composition is skewed to low complexity. Positions 68–117 (PCALRFTSARRMETTVNAPWSLPTVLHKRTLGLSGWSMTWIEEYIKDCVF) are mitochondrial targeting sequence.

It belongs to the orthohepadnavirus protein X family. As to quaternary structure, may form homodimer. May interact with host CEBPA, CFLAR, CREB1, DDB1, E4F1, HBXIP, HSPD1/HSP60, NFKBIA, POLR2E and SMAD4. Interacts with host SMC5-SMC6 complex and induces its degradation. Interacts with host TRPC4AP; leading to prevent ubiquitination of TRPC4AP. Interacts with host PLSCR1; this interaction promotes ubiquitination and degradation of HBx and impairs HBx-mediated cell proliferation. Post-translationally, a fraction may be phosphorylated in insect cells and HepG2 cells, a human hepatoblastoma cell line. Phosphorylated in vitro by host protein kinase C or mitogen-activated protein kinase. N-acetylated in insect cells.

The protein localises to the host cytoplasm. It localises to the host nucleus. The protein resides in the host mitochondrion. Its function is as follows. Multifunctional protein that plays a role in silencing host antiviral defenses and promoting viral transcription. Does not seem to be essential for HBV infection. May be directly involved in development of cirrhosis and liver cancer (hepatocellular carcinoma). Most of cytosolic activities involve modulation of cytosolic calcium. The effect on apoptosis is controversial depending on the cell types in which the studies have been conducted. May induce apoptosis by localizing in mitochondria and causing loss of mitochondrial membrane potential. May also modulate apoptosis by binding host CFLAR, a key regulator of the death-inducing signaling complex (DISC). Promotes viral transcription by using the host E3 ubiquitin ligase DDB1 to target the SMC5-SMC6 complex to proteasomal degradation. This host complex would otherwise bind to viral episomal DNA, and prevents its transcription. Moderately stimulates transcription of many different viral and cellular transcription elements. Promoters and enhancers stimulated by HBx contain DNA binding sites for NF-kappa-B, AP-1, AP-2, c-EBP, ATF/CREB, or the calcium-activated factor NF-AT. The chain is Protein X from Homo sapiens (Human).